The primary structure comprises 277 residues: Carbonyl reductase [NADPH] 1 (277 aa).

Residue serine 2 is modified to N-acetylserine. Phosphoserine is present on residues serine 2 and serine 30. NADP(+)-binding positions include 10–34, 63–64, and asparagine 90; these read VTGGNKGIGLAIVRDLCRLFSGDVV and DI. Glutathione-binding positions include 95-97 and glutamine 106; that span reads FKV. Serine 140 serves as a coordination point for substrate. A glutathione-binding site is contributed by 193–194; sequence AY. Residue tyrosine 194 is the Proton acceptor of the active site. Residues 194–198 and 231–233 each bind NADP(+); these read YGVTK and VRT. Lysine 239 is modified (N6-1-carboxyethyl lysine).

The protein belongs to the short-chain dehydrogenases/reductases (SDR) family. Monomer.

It localises to the cytoplasm. The catalysed reaction is a secondary alcohol + NADP(+) = a ketone + NADPH + H(+). It carries out the reaction prostaglandin F2alpha + NADP(+) = prostaglandin E2 + NADPH + H(+). The enzyme catalyses prostaglandin E1 + NADP(+) = 15-oxoprostaglandin E1 + NADPH + H(+). It catalyses the reaction menadione + NADPH + H(+) = menadiol + NADP(+). The catalysed reaction is prostaglandin D2 + NADP(+) = 15-oxoprostaglandin D2 + NADPH + H(+). It carries out the reaction prostaglandin E2 + NADP(+) = 15-oxoprostaglandin E2 + NADPH + H(+). The enzyme catalyses prostaglandin F2alpha + NADP(+) = 15-oxoprostaglandin F2alpha + NADPH + H(+). It catalyses the reaction daunorubicin + NADPH + H(+) = 13-dihydrodaunorubicin + NADP(+). The catalysed reaction is S-nitrosoglutathione + NADPH + H(+) = S-(hydroxysulfenamide)glutathione + NADP(+). It carries out the reaction a primary alcohol + NADP(+) = an aldehyde + NADPH + H(+). The enzyme catalyses cortisol + NADPH + H(+) = 20beta-dihydrocortisol + NADP(+). It catalyses the reaction corticosterone + NADPH + H(+) = 20beta-dihydrocorticosterone + NADP(+). In terms of biological role, NADPH-dependent reductase with broad substrate specificity. Catalyzes the reduction of a wide variety of carbonyl compounds including quinones, prostaglandins, menadione, plus various xenobiotics. Catalyzes the reduction of the antitumor anthracyclines doxorubicin and daunorubicin to the cardiotoxic compounds doxorubicinol and daunorubicinol. Can convert prostaglandin E to prostaglandin F2-alpha. Can bind glutathione, which explains its higher affinity for glutathione-conjugated substrates. Catalyzes the reduction of S-nitrosoglutathione. In addition, participates in the glucocorticoid metabolism by catalyzing the NADPH-dependent cortisol/corticosterone into 20beta-dihydrocortisol (20b-DHF) or 20beta-corticosterone (20b-DHB), which are weak agonists of NR3C1 and NR3C2 in adipose tissue. The chain is Carbonyl reductase [NADPH] 1 from Pongo abelii (Sumatran orangutan).